Here is a 97-residue protein sequence, read N- to C-terminus: Small ribosomal subunit protein uS19 (97 aa).

Belongs to the universal ribosomal protein uS19 family.

Its function is as follows. Protein S19 forms a complex with S13 that binds strongly to the 16S ribosomal RNA. This chain is Small ribosomal subunit protein uS19, found in Pelagibacter ubique (strain HTCC1062).